We begin with the raw amino-acid sequence, 464 residues long: Cysteine--tRNA ligase (464 aa).

Cys-32 contributes to the Zn(2+) binding site. Positions 34–44 match the 'HIGH' region motif; it reads VTVYDDCHIGH. Residues Cys-213, His-238, and Glu-242 each coordinate Zn(2+). Positions 270 to 274 match the 'KMSKS' region motif; the sequence is KMSKS. Lys-273 contributes to the ATP binding site.

Belongs to the class-I aminoacyl-tRNA synthetase family. Monomer. Zn(2+) serves as cofactor.

The protein localises to the cytoplasm. It catalyses the reaction tRNA(Cys) + L-cysteine + ATP = L-cysteinyl-tRNA(Cys) + AMP + diphosphate. The sequence is that of Cysteine--tRNA ligase from Francisella tularensis subsp. holarctica (strain LVS).